A 247-amino-acid chain; its full sequence is uncharacterized protein (247 aa).

NADP(+) contacts are provided by Leu-11, Asn-85, and Lys-119. The active-site Proton donor is Ser-136. Residues Tyr-150, Lys-154, Val-181, and Thr-183 each contribute to the NADP(+) site. The active-site Proton acceptor is the Tyr-150. Catalysis depends on Lys-154, which acts as the Lowers pKa of active site Tyr.

This sequence belongs to the short-chain dehydrogenases/reductases (SDR) family.

This is an uncharacterized protein from Schizosaccharomyces pombe (strain 972 / ATCC 24843) (Fission yeast).